We begin with the raw amino-acid sequence, 394 residues long: Phosphoglycerate kinase (394 aa).

Substrate-binding positions include Asp-21–Asn-23, His-59–Arg-62, Arg-117, and Arg-150. Residues Lys-201, Glu-318, and Gly-344–Thr-347 contribute to the ATP site.

This sequence belongs to the phosphoglycerate kinase family. Monomer.

Its subcellular location is the cytoplasm. The enzyme catalyses (2R)-3-phosphoglycerate + ATP = (2R)-3-phospho-glyceroyl phosphate + ADP. It functions in the pathway carbohydrate degradation; glycolysis; pyruvate from D-glyceraldehyde 3-phosphate: step 2/5. This chain is Phosphoglycerate kinase, found in Blochmanniella pennsylvanica (strain BPEN).